A 444-amino-acid polypeptide reads, in one-letter code: MSLDSNPRIFTVSRLNSEVRLLLENEMGIVWLVGEVSNLTMPVSGHWYLTLKDSQAQVKCAMFKGNNRRVTFKPQNGKQVLVKARLSLYEPRGDYQLIIESMQAEGDGRLQQEFDHLKMSLAAEGLFAQTAKKALPEQPKCVGIITSKTGAALFDILNVLKRRDPNLPVIIYPTLVQGTNAAIQIAQAIGRANSRNECDILIVGRGGGSLEDLWCFNEEIVARTIAASQIPIVSAVGHEIDVTIADFVADVRAPTPSAAAELVSRDLSSQLQIVSHQKRRLRSAIERYLSQQQKRLSTYQFRIEKQHPQLQLNTQSQRLDDLNQRLENHIQQRLERNQHKIENLSLRLSNLSPARKVHQDKQRIETLKRRLLDSMDRNLLMQRHQLALAAEKLDTVSPLATLKRGYSITRNASGSLITSTQQVHTGDTITTRFVDGEVQSTVDK.

It belongs to the XseA family. As to quaternary structure, heterooligomer composed of large and small subunits.

The protein resides in the cytoplasm. The catalysed reaction is Exonucleolytic cleavage in either 5'- to 3'- or 3'- to 5'-direction to yield nucleoside 5'-phosphates.. In terms of biological role, bidirectionally degrades single-stranded DNA into large acid-insoluble oligonucleotides, which are then degraded further into small acid-soluble oligonucleotides. The chain is Exodeoxyribonuclease 7 large subunit from Aliivibrio salmonicida (strain LFI1238) (Vibrio salmonicida (strain LFI1238)).